The chain runs to 497 residues: 3-octaprenyl-4-hydroxybenzoate carboxy-lyase (497 aa).

Asn-175 lines the Mn(2+) pocket. Prenylated FMN-binding positions include 178–180, 192–194, and 197–198; these read IYR, RWL, and RG. Glu-241 contributes to the Mn(2+) binding site. Residue Asp-290 is the Proton donor of the active site.

This sequence belongs to the UbiD family. In terms of assembly, homohexamer. Prenylated FMN serves as cofactor. The cofactor is Mn(2+).

The protein localises to the cell membrane. It carries out the reaction a 4-hydroxy-3-(all-trans-polyprenyl)benzoate + H(+) = a 2-(all-trans-polyprenyl)phenol + CO2. It participates in cofactor biosynthesis; ubiquinone biosynthesis. Catalyzes the decarboxylation of 3-octaprenyl-4-hydroxy benzoate to 2-octaprenylphenol, an intermediate step in ubiquinone biosynthesis. The chain is 3-octaprenyl-4-hydroxybenzoate carboxy-lyase from Shigella flexneri.